The following is a 144-amino-acid chain: Large ribosomal subunit protein uL13 (144 aa).

It belongs to the universal ribosomal protein uL13 family. Part of the 50S ribosomal subunit.

In terms of biological role, this protein is one of the early assembly proteins of the 50S ribosomal subunit, although it is not seen to bind rRNA by itself. It is important during the early stages of 50S assembly. This chain is Large ribosomal subunit protein uL13, found in Clostridium acetobutylicum (strain ATCC 824 / DSM 792 / JCM 1419 / IAM 19013 / LMG 5710 / NBRC 13948 / NRRL B-527 / VKM B-1787 / 2291 / W).